A 91-amino-acid chain; its full sequence is MSDYNLVGVIKVMPTDPDVNLDELEEKLKAVIPEKYGLAKVEREPIAFGLVALKFYVLGRDEEGYSFDEVADIFRQVENVESAEVETVSRI.

It belongs to the EF-1-beta/EF-1-delta family.

Promotes the exchange of GDP for GTP in EF-1-alpha/GDP, thus allowing the regeneration of EF-1-alpha/GTP that could then be used to form the ternary complex EF-1-alpha/GTP/AAtRNA. This Thermococcus kodakarensis (strain ATCC BAA-918 / JCM 12380 / KOD1) (Pyrococcus kodakaraensis (strain KOD1)) protein is Elongation factor 1-beta.